We begin with the raw amino-acid sequence, 337 residues long: Glyceraldehyde-3-phosphate dehydrogenase 1 (337 aa).

Residues 11–12, Asp33, and Arg78 each bind NAD(+); that span reads RI. Residues 149–151, Thr180, 209–210, and Arg232 contribute to the D-glyceraldehyde 3-phosphate site; these read SCT and TG. The active-site Nucleophile is Cys150. Residue Asn318 coordinates NAD(+).

Belongs to the glyceraldehyde-3-phosphate dehydrogenase family. As to quaternary structure, homotetramer.

Its subcellular location is the cytoplasm. The catalysed reaction is D-glyceraldehyde 3-phosphate + phosphate + NAD(+) = (2R)-3-phospho-glyceroyl phosphate + NADH + H(+). It functions in the pathway carbohydrate degradation; glycolysis; pyruvate from D-glyceraldehyde 3-phosphate: step 1/5. This Agaricus bisporus (White button mushroom) protein is Glyceraldehyde-3-phosphate dehydrogenase 1 (gpd1).